We begin with the raw amino-acid sequence, 576 residues long: Sulfite reductase [NADPH] hemoprotein beta-component (576 aa).

[4Fe-4S] cluster-binding residues include Cys-435, Cys-441, Cys-480, and Cys-484. A siroheme-binding site is contributed by Cys-484.

The protein belongs to the nitrite and sulfite reductase 4Fe-4S domain family. In terms of assembly, alpha(8)-beta(8). The alpha component is a flavoprotein, the beta component is a hemoprotein. It depends on siroheme as a cofactor. Requires [4Fe-4S] cluster as cofactor.

The enzyme catalyses hydrogen sulfide + 3 NADP(+) + 3 H2O = sulfite + 3 NADPH + 4 H(+). Its pathway is sulfur metabolism; hydrogen sulfide biosynthesis; hydrogen sulfide from sulfite (NADPH route): step 1/1. Functionally, component of the sulfite reductase complex that catalyzes the 6-electron reduction of sulfite to sulfide. This is one of several activities required for the biosynthesis of L-cysteine from sulfate. This is Sulfite reductase [NADPH] hemoprotein beta-component from Yersinia pseudotuberculosis serotype O:1b (strain IP 31758).